Consider the following 52-residue polypeptide: Rubredoxin (52 aa).

The Rubredoxin-like domain occupies 1 to 52 (MKKYVCTVCGYEYDPAEGDPDNGVKPGTSFDDLPADWVCPVCGAPKSEFEAA). Positions 6, 9, 39, and 42 each coordinate Fe cation.

This sequence belongs to the rubredoxin family. Requires Fe(3+) as cofactor.

The protein resides in the cytoplasm. Its function is as follows. Rubredoxin is a small nonheme, iron protein lacking acid-labile sulfide. Its single Fe, chelated to 4 Cys, functions as an electron acceptor and may also stabilize the conformation of the molecule. In terms of biological role, electron acceptor for cytoplasmic lactate dehydrogenase. The chain is Rubredoxin (rub) from Nitratidesulfovibrio vulgaris (strain ATCC 29579 / DSM 644 / CCUG 34227 / NCIMB 8303 / VKM B-1760 / Hildenborough) (Desulfovibrio vulgaris).